Here is a 208-residue protein sequence, read N- to C-terminus: Protein-L-isoaspartate O-methyltransferase (208 aa).

Ser59 is a catalytic residue.

This sequence belongs to the methyltransferase superfamily. L-isoaspartyl/D-aspartyl protein methyltransferase family.

It localises to the cytoplasm. The enzyme catalyses [protein]-L-isoaspartate + S-adenosyl-L-methionine = [protein]-L-isoaspartate alpha-methyl ester + S-adenosyl-L-homocysteine. Functionally, catalyzes the methyl esterification of L-isoaspartyl residues in peptides and proteins that result from spontaneous decomposition of normal L-aspartyl and L-asparaginyl residues. It plays a role in the repair and/or degradation of damaged proteins. The protein is Protein-L-isoaspartate O-methyltransferase of Vibrio cholerae serotype O1 (strain ATCC 39541 / Classical Ogawa 395 / O395).